Reading from the N-terminus, the 423-residue chain is Serine hydroxymethyltransferase (423 aa).

(6S)-5,6,7,8-tetrahydrofolate is bound by residues Leu120 and 124-126 (GHL). At Lys229 the chain carries N6-(pyridoxal phosphate)lysine. Residue 353–355 (SPF) participates in (6S)-5,6,7,8-tetrahydrofolate binding.

It belongs to the SHMT family. In terms of assembly, homodimer. It depends on pyridoxal 5'-phosphate as a cofactor.

It localises to the cytoplasm. It carries out the reaction (6R)-5,10-methylene-5,6,7,8-tetrahydrofolate + glycine + H2O = (6S)-5,6,7,8-tetrahydrofolate + L-serine. Its pathway is one-carbon metabolism; tetrahydrofolate interconversion. It participates in amino-acid biosynthesis; glycine biosynthesis; glycine from L-serine: step 1/1. Catalyzes the reversible interconversion of serine and glycine with tetrahydrofolate (THF) serving as the one-carbon carrier. This reaction serves as the major source of one-carbon groups required for the biosynthesis of purines, thymidylate, methionine, and other important biomolecules. Also exhibits THF-independent aldolase activity toward beta-hydroxyamino acids, producing glycine and aldehydes, via a retro-aldol mechanism. This is Serine hydroxymethyltransferase from Prochlorococcus marinus (strain MIT 9515).